Reading from the N-terminus, the 841-residue chain is Microcephalin (841 aa).

The region spanning 1-93 is the BRCT 1 domain; sequence MAAPILKDVV…AHIDESLFPA (93 aa). 4 positions are modified to phosphoserine: Ser-278, Ser-286, Ser-295, and Ser-332. Position 334 is a phosphothreonine (Thr-334). Disordered stretches follow at residues 340–375, 417–445, 481–507, and 562–593; these read GHLL…RKRS, PDNL…SCRS, SSPQ…SAPE, and VGLK…PRSV. The span at 342-358 shows a compositional bias: basic residues; the sequence is LLIHSRPRSSSVKRKRV. Over residues 433–445 the composition is skewed to polar residues; it reads QLPSSPAQFSCRS. Over residues 565 to 583 the composition is skewed to polar residues; the sequence is KSTQDKGTTSKISNSSEGE. 2 BRCT domains span residues 646-736 and 757-839; these read SGKG…SFEL and YRGT…NYLL.

Interacts with CDC27 and maybe other components of the APC/C complex. Interacts with histone variant H2AX under DNA damage conditions.

The protein resides in the cytoplasm. It localises to the cytoskeleton. The protein localises to the microtubule organizing center. It is found in the centrosome. Implicated in chromosome condensation and DNA damage induced cellular responses. May play a role in neurogenesis and regulation of the size of the cerebral cortex. The polypeptide is Microcephalin (Colobus guereza (Mantled guereza)).